The primary structure comprises 404 residues: Cysteine desulfurase IscS (404 aa).

Pyridoxal 5'-phosphate-binding positions include 75-76 (AT), N155, Q183, and 203-205 (SSH). At K206 the chain carries N6-(pyridoxal phosphate)lysine. T243 serves as a coordination point for pyridoxal 5'-phosphate. The active-site Cysteine persulfide intermediate is C328. C328 contributes to the [2Fe-2S] cluster binding site.

The protein belongs to the class-V pyridoxal-phosphate-dependent aminotransferase family. NifS/IscS subfamily. In terms of assembly, homodimer. Forms a heterotetramer with IscU, interacts with other sulfur acceptors. Pyridoxal 5'-phosphate serves as cofactor.

The protein localises to the cytoplasm. It carries out the reaction (sulfur carrier)-H + L-cysteine = (sulfur carrier)-SH + L-alanine. The protein operates within cofactor biosynthesis; iron-sulfur cluster biosynthesis. Its function is as follows. Master enzyme that delivers sulfur to a number of partners involved in Fe-S cluster assembly, tRNA modification or cofactor biosynthesis. Catalyzes the removal of elemental sulfur atoms from cysteine to produce alanine. Functions as a sulfur delivery protein for Fe-S cluster synthesis onto IscU, an Fe-S scaffold assembly protein, as well as other S acceptor proteins. The sequence is that of Cysteine desulfurase IscS from Histophilus somni (strain 129Pt) (Haemophilus somnus).